The chain runs to 441 residues: Arginine biosynthesis bifunctional protein ArgJ, mitochondrial (441 aa).

6 residues coordinate substrate: T177, K204, T215, E301, N436, and S441. T215 functions as the Nucleophile in the catalytic mechanism.

The protein belongs to the ArgJ family. As to quaternary structure, heterodimer of an alpha and a beta chain. Post-translationally, the alpha and beta chains are autoproteolytically processed from a single precursor protein within the mitochondrion.

Its subcellular location is the mitochondrion matrix. It catalyses the reaction N(2)-acetyl-L-ornithine + L-glutamate = N-acetyl-L-glutamate + L-ornithine. It carries out the reaction L-glutamate + acetyl-CoA = N-acetyl-L-glutamate + CoA + H(+). Its pathway is amino-acid biosynthesis; L-arginine biosynthesis; L-ornithine and N-acetyl-L-glutamate from L-glutamate and N(2)-acetyl-L-ornithine (cyclic): step 1/1. It functions in the pathway amino-acid biosynthesis; L-arginine biosynthesis; N(2)-acetyl-L-ornithine from L-glutamate: step 1/4. Catalyzes two activities which are involved in the cyclic version of arginine biosynthesis: the synthesis of acetylglutamate from glutamate and acetyl-CoA, and of ornithine by transacetylation between acetylornithine and glutamate. This Lachancea thermotolerans (strain ATCC 56472 / CBS 6340 / NRRL Y-8284) (Yeast) protein is Arginine biosynthesis bifunctional protein ArgJ, mitochondrial.